The primary structure comprises 307 residues: 4-diphosphocytidyl-2-C-methyl-D-erythritol kinase (307 aa).

Residue K14 is part of the active site. 107 to 117 (PVAGGMAGGSA) contacts ATP. D149 is an active-site residue.

Belongs to the GHMP kinase family. IspE subfamily.

It catalyses the reaction 4-CDP-2-C-methyl-D-erythritol + ATP = 4-CDP-2-C-methyl-D-erythritol 2-phosphate + ADP + H(+). The protein operates within isoprenoid biosynthesis; isopentenyl diphosphate biosynthesis via DXP pathway; isopentenyl diphosphate from 1-deoxy-D-xylulose 5-phosphate: step 3/6. Functionally, catalyzes the phosphorylation of the position 2 hydroxy group of 4-diphosphocytidyl-2C-methyl-D-erythritol. The sequence is that of 4-diphosphocytidyl-2-C-methyl-D-erythritol kinase from Thermobifida fusca (strain YX).